We begin with the raw amino-acid sequence, 30 residues long: uncharacterized protein (30 aa).

Residues 9–26 (YRLVIIVLISVYYRYRFF) form a helical membrane-spanning segment.

It localises to the plastid. Its subcellular location is the chloroplast membrane. This is an uncharacterized protein from Marchantia polymorpha (Common liverwort).